The primary structure comprises 186 residues: ATP synthase subunit delta (186 aa).

The protein belongs to the ATPase delta chain family. In terms of assembly, F-type ATPases have 2 components, F(1) - the catalytic core - and F(0) - the membrane proton channel. F(1) has five subunits: alpha(3), beta(3), gamma(1), delta(1), epsilon(1). F(0) has three main subunits: a(1), b(2) and c(10-14). The alpha and beta chains form an alternating ring which encloses part of the gamma chain. F(1) is attached to F(0) by a central stalk formed by the gamma and epsilon chains, while a peripheral stalk is formed by the delta and b chains.

The protein resides in the cell inner membrane. Its function is as follows. F(1)F(0) ATP synthase produces ATP from ADP in the presence of a proton or sodium gradient. F-type ATPases consist of two structural domains, F(1) containing the extramembraneous catalytic core and F(0) containing the membrane proton channel, linked together by a central stalk and a peripheral stalk. During catalysis, ATP synthesis in the catalytic domain of F(1) is coupled via a rotary mechanism of the central stalk subunits to proton translocation. In terms of biological role, this protein is part of the stalk that links CF(0) to CF(1). It either transmits conformational changes from CF(0) to CF(1) or is implicated in proton conduction. The protein is ATP synthase subunit delta of Leptospira interrogans serogroup Icterohaemorrhagiae serovar copenhageni (strain Fiocruz L1-130).